The chain runs to 334 residues: N-acetyl-gamma-glutamyl-phosphate reductase (334 aa).

Cys-154 is an active-site residue.

This sequence belongs to the NAGSA dehydrogenase family. Type 1 subfamily.

The protein resides in the cytoplasm. It carries out the reaction N-acetyl-L-glutamate 5-semialdehyde + phosphate + NADP(+) = N-acetyl-L-glutamyl 5-phosphate + NADPH + H(+). It participates in amino-acid biosynthesis; L-arginine biosynthesis; N(2)-acetyl-L-ornithine from L-glutamate: step 3/4. Its function is as follows. Catalyzes the NADPH-dependent reduction of N-acetyl-5-glutamyl phosphate to yield N-acetyl-L-glutamate 5-semialdehyde. The protein is N-acetyl-gamma-glutamyl-phosphate reductase of Buchnera aphidicola subsp. Schizaphis graminum (strain Sg).